Reading from the N-terminus, the 560-residue chain is MFS siderochrome iron transporter 1 (560 aa).

Asn29 carries an N-linked (GlcNAc...) asparagine glycan. Transmembrane regions (helical) follow at residues Leu53–Val73, Leu90–Ala110, Val115–Met135, Val146–Met166, Met177–Gly194, Phe211–Phe231, Val264–Val284, Trp291–Leu311, Pro331–Ile351, Ala354–Leu374, and Phe379–Pro399. Asn404 carries an N-linked (GlcNAc...) asparagine glycan. 3 helical membrane passes run Ile407–Cys427, Val441–Ala461, and Val522–Val542.

The protein belongs to the major facilitator superfamily.

Its subcellular location is the membrane. Major facilitator transporter involved in siderophore transport. In Ajellomyces capsulatus (Darling's disease fungus), this protein is MFS siderochrome iron transporter 1.